A 278-amino-acid polypeptide reads, in one-letter code: Protoheme IX farnesyltransferase (278 aa).

9 helical membrane-spanning segments follow: residues 12 to 32 (VIWL…GTVD), 36 to 56 (LAAL…FNHY), 72 to 92 (PLPA…ALSA), 105 to 124 (LPGV…YTVW), 130 to 150 (WLNI…GYAL), 157 to 177 (LPAV…IWAL), 204 to 224 (AIIS…YLVF), 228 to 248 (LPGL…SALA), and 257 to 277 (MWRM…ALVF).

This sequence belongs to the UbiA prenyltransferase family. Protoheme IX farnesyltransferase subfamily.

The protein resides in the cell membrane. It catalyses the reaction heme b + (2E,6E)-farnesyl diphosphate + H2O = Fe(II)-heme o + diphosphate. The protein operates within porphyrin-containing compound metabolism; heme O biosynthesis; heme O from protoheme: step 1/1. In terms of biological role, converts heme B (protoheme IX) to heme O by substitution of the vinyl group on carbon 2 of heme B porphyrin ring with a hydroxyethyl farnesyl side group. In Pyrobaculum neutrophilum (strain DSM 2338 / JCM 9278 / NBRC 100436 / V24Sta) (Thermoproteus neutrophilus), this protein is Protoheme IX farnesyltransferase.